Consider the following 102-residue polypeptide: Small ribosomal subunit protein uS10 (102 aa).

The protein belongs to the universal ribosomal protein uS10 family. In terms of assembly, part of the 30S ribosomal subunit.

Its function is as follows. Involved in the binding of tRNA to the ribosomes. The chain is Small ribosomal subunit protein uS10 from Methanococcus maripaludis (strain C5 / ATCC BAA-1333).